Consider the following 255-residue polypeptide: uncharacterized protein (255 aa).

A signal peptide spans methionine 1 to glycine 23. Cysteine 24 carries the N-palmitoyl cysteine lipid modification. The S-diacylglycerol cysteine moiety is linked to residue cysteine 24.

This sequence belongs to the staphylococcal tandem lipoprotein family.

It localises to the cell membrane. This is an uncharacterized protein from Staphylococcus aureus (strain N315).